A 428-amino-acid chain; its full sequence is Cytochrome c biogenesis protein CcsB (428 aa).

Transmembrane regions (helical) follow at residues 14–34 (LRFA…GTFI), 72–92 (SIWF…CSFR), and 162–182 (IGPL…AYGS).

This sequence belongs to the Ccs1/CcsB family. May interact with CcsA.

Its subcellular location is the cellular thylakoid membrane. Its function is as follows. Required during biogenesis of c-type cytochromes (cytochrome c6 and cytochrome f) at the step of heme attachment. The protein is Cytochrome c biogenesis protein CcsB of Prochlorococcus marinus (strain MIT 9312).